Consider the following 280-residue polypeptide: Probable N-acetyltransferase 14 (280 aa).

Transmembrane regions (helical) follow at residues Leu37–Ile57 and Cys60–Leu80. The segment at Pro111–Glu152 is disordered. The 158-residue stretch at Pro116 to Thr273 folds into the N-acetyltransferase domain.

This sequence belongs to the camello family.

It is found in the membrane. Probable acetyltransferase. In Danio rerio (Zebrafish), this protein is Probable N-acetyltransferase 14 (nat14).